The sequence spans 638 residues: Threonine--tRNA ligase (638 aa).

The 61-residue stretch at 1–61 folds into the TGS domain; the sequence is MPKITLPDGT…KNDSKVVIIT (61 aa). The segment at 242-533 is catalytic; the sequence is DHRKLGKKHS…LIEQYEAKFP (292 aa). Positions 333, 384, and 510 each coordinate Zn(2+).

Belongs to the class-II aminoacyl-tRNA synthetase family. As to quaternary structure, homodimer. Requires Zn(2+) as cofactor.

It localises to the cytoplasm. It carries out the reaction tRNA(Thr) + L-threonine + ATP = L-threonyl-tRNA(Thr) + AMP + diphosphate + H(+). In terms of biological role, catalyzes the attachment of threonine to tRNA(Thr) in a two-step reaction: L-threonine is first activated by ATP to form Thr-AMP and then transferred to the acceptor end of tRNA(Thr). Also edits incorrectly charged L-seryl-tRNA(Thr). The protein is Threonine--tRNA ligase of Prochlorococcus marinus (strain MIT 9515).